A 286-amino-acid polypeptide reads, in one-letter code: Diaminopimelate epimerase (286 aa).

2 residues coordinate substrate: asparagine 13 and asparagine 66. The active-site Proton donor is cysteine 75. Substrate is bound by residues 76–77 (GN), asparagine 165, asparagine 198, and 216–217 (ER). The active-site Proton acceptor is the cysteine 225. 226-227 (GT) provides a ligand contact to substrate.

It belongs to the diaminopimelate epimerase family. Homodimer.

It localises to the cytoplasm. The catalysed reaction is (2S,6S)-2,6-diaminopimelate = meso-2,6-diaminopimelate. It functions in the pathway amino-acid biosynthesis; L-lysine biosynthesis via DAP pathway; DL-2,6-diaminopimelate from LL-2,6-diaminopimelate: step 1/1. Functionally, catalyzes the stereoinversion of LL-2,6-diaminopimelate (L,L-DAP) to meso-diaminopimelate (meso-DAP), a precursor of L-lysine and an essential component of the bacterial peptidoglycan. The chain is Diaminopimelate epimerase from Oceanobacillus iheyensis (strain DSM 14371 / CIP 107618 / JCM 11309 / KCTC 3954 / HTE831).